Here is a 458-residue protein sequence, read N- to C-terminus: Ammonium transporter Rh type B (458 aa).

The Cytoplasmic portion of the chain corresponds to 1–11 (MTDAATNMRLK). A helical transmembrane segment spans residues 12-32 (LPITCFILEIILIILFGTLVQ). Residues 33–58 (YDYETDAKEWHNTSHQDYENDFYFRY) are Extracellular-facing. Residue Asn-44 is glycosylated (N-linked (GlcNAc...) asparagine). A helical transmembrane segment spans residues 59–79 (PSFQDVHVMIFVGFGFLMTFL). Over 80 to 83 (QRYG) the chain is Cytoplasmic. Residues 84 to 104 (FGSVGFNFLIAAFSLQWATLM) form a helical membrane-spanning segment. The Extracellular portion of the chain corresponds to 105–121 (QGFFHGMHGGKIHIGVE). A helical transmembrane segment spans residues 122–142 (SMINADFCTGSVLISFGAVLG). The Cytoplasmic segment spans residues 143-151 (KTSPIQLLT). The chain crosses the membrane as a helical span at residues 152–172 (MAIFEVTLFAVNEFILLSLLG). The Extracellular segment spans residues 173-176 (TKDA). The chain crosses the membrane as a helical span at residues 177–197 (GGSMTIHTFGAYFGLMVTRIL). Residues 198–216 (YRPNLDKSKHRNSSVYHSD) are Cytoplasmic-facing. The helical transmembrane segment at 217 to 237 (LFAMIGTVYLWMFWPSFNSAI) threads the bilayer. Residues 238 to 247 (TAHGDDQHRT) lie on the Extracellular side of the membrane. Residues 248-270 (ALNTYYSLAACTLATYGMSAITS) form a helical membrane-spanning segment. Over 271 to 274 (HDGK) the chain is Cytoplasmic. The helical transmembrane segment at 275 to 295 (LDMVHIQNAALAGGVAVGTAG) threads the bilayer. At 296 to 298 (EMM) the chain is on the extracellular side. A helical transmembrane segment spans residues 299–319 (LTPFGSMIVGFMAGIISVLGF). Topologically, residues 320-340 (KFLSPILEDKLKIQDTCGIHN) are cytoplasmic. A helical membrane pass occupies residues 341–361 (LHGMPGVLGAIVGAVTAALAT). The Extracellular segment spans residues 362–391 (TDVYGQGMADVFPAVADGSVNATKQGGIQA). The chain crosses the membrane as a helical span at residues 392–412 (LSLAITLGIAVLGGLIVGFVL). The Cytoplasmic portion of the chain corresponds to 413–458 (KLPVFGTPPDTLCFEDSVYWEVPGSESPEEGELTSVKPEETEHLNS). Residues 436–458 (GSESPEEGELTSVKPEETEHLNS) are disordered. Positions 449–458 (KPEETEHLNS) are enriched in basic and acidic residues.

This sequence belongs to the ammonium transporter (TC 2.A.49) family. Rh subfamily. In terms of tissue distribution, specifically expressed in the gill by pavement cells (at protein level).

Its subcellular location is the apicolateral cell membrane. It is found in the cytoplasmic vesicle membrane. Functionally, functions as an ammonia transporter. May play a role in the elimination of ammonia in the gill. The chain is Ammonium transporter Rh type B (rhbg) from Takifugu rubripes (Japanese pufferfish).